A 192-amino-acid chain; its full sequence is Interferon (192 aa).

The signal sequence occupies residues 1-30 (MAVPASPQHPRGYGILLLTLLMKALAAAAA). 3 cysteine pairs are disulfide-bonded: cysteine 31/cysteine 128, cysteine 60/cysteine 154, and cysteine 67/cysteine 167. N-linked (GlcNAc...) asparagine glycosylation is found at asparagine 70 and asparagine 77.

It belongs to the alpha/beta interferon family.

It localises to the secreted. Its function is as follows. Has antiviral activities. The polypeptide is Interferon (Meleagris gallopavo (Wild turkey)).